We begin with the raw amino-acid sequence, 439 residues long: Dolichyl-diphosphooligosaccharide--protein glycosyltransferase 48 kDa subunit (439 aa).

A signal peptide spans 1–26 (MEPSTAARAWALFWLLPPLLGAVCAS). The Lumenal segment spans residues 27–410 (GPRTLVLLDN…YERFIPSAYP (384 aa)). A helical membrane pass occupies residues 411–430 (YYASAFSMMLGLFIFSIVFL). Residues 431–439 (HMKEKEKSD) lie on the Cytoplasmic side of the membrane.

Belongs to the DDOST 48 kDa subunit family. In terms of assembly, component of the oligosaccharyltransferase (OST) complex. OST exists in two different complex forms which contain common core subunits RPN1, RPN2, OST48, OST4, DAD1 and TMEM258, either STT3A or STT3B as catalytic subunits, and form-specific accessory subunits. STT3A complex assembly occurs through the formation of 3 subcomplexes. Subcomplex 1 contains RPN1 and TMEM258, subcomplex 2 contains the STT3A-specific subunits STT3A, DC2/OSTC, and KCP2 as well as the core subunit OST4, and subcomplex 3 contains RPN2, DAD1, and OST48. The STT3A complex can form stable complexes with the Sec61 complex or with both the Sec61 and TRAP complexes. Interacts with SMIM22.

The protein localises to the endoplasmic reticulum membrane. It functions in the pathway protein modification; protein glycosylation. In terms of biological role, subunit of the oligosaccharyl transferase (OST) complex that catalyzes the initial transfer of a defined glycan (Glc(3)Man(9)GlcNAc(2) in eukaryotes) from the lipid carrier dolichol-pyrophosphate to an asparagine residue within an Asn-X-Ser/Thr consensus motif in nascent polypeptide chains, the first step in protein N-glycosylation. N-glycosylation occurs cotranslationally and the complex associates with the Sec61 complex at the channel-forming translocon complex that mediates protein translocation across the endoplasmic reticulum (ER). All subunits are required for a maximal enzyme activity. Required for the assembly of both SST3A- and SS3B-containing OST complexes. The chain is Dolichyl-diphosphooligosaccharide--protein glycosyltransferase 48 kDa subunit from Pongo abelii (Sumatran orangutan).